A 422-amino-acid polypeptide reads, in one-letter code: Elongation factor 1-alpha (422 aa).

In terms of domain architecture, tr-type G spans 5-221 (KPHMNLAVIG…NSLKEPEKPS (217 aa)). A G1 region spans residues 14–21 (GHIDHGKS). 14–21 (GHIDHGKS) contacts GTP. Ser-21 contributes to the Mg(2+) binding site. The interval 70-74 (GITID) is G2. The G3 stretch occupies residues 91 to 94 (DCPG). Residues 91-95 (DCPGH) and 146-149 (NKMD) each bind GTP. Positions 146 to 149 (NKMD) are G4. Positions 185–187 (SAF) are G5.

It belongs to the TRAFAC class translation factor GTPase superfamily. Classic translation factor GTPase family. EF-Tu/EF-1A subfamily.

Its subcellular location is the cytoplasm. It carries out the reaction GTP + H2O = GDP + phosphate + H(+). In terms of biological role, GTP hydrolase that promotes the GTP-dependent binding of aminoacyl-tRNA to the A-site of ribosomes during protein biosynthesis. This Methanosarcina mazei (strain ATCC BAA-159 / DSM 3647 / Goe1 / Go1 / JCM 11833 / OCM 88) (Methanosarcina frisia) protein is Elongation factor 1-alpha.